The chain runs to 263 residues: MTQPSLNPLVIKLGGAALSCSQTLSQLFGAIASYQQKEQRQIVIVHGGGYLVDELMEKLQLPTVKKNGLRVTPYDQIPLIAGALAGTANKLLQGQAMADGLNAIGLSLADGGLCQVEELDPELGAVGKATPGDSRLLQTILNAGALPIISSIGLTAQGQLMNVNADQAAVAVAGALDAQLVLLSDVSGVLDGKGHLIKSLNQQEADALIAGKVITDGMIVKVQAALEAANDLGRAIEVATWRYPENLEKLFAGESIGTQFLPA.

Substrate contacts are provided by residues 48–49, R70, and N162; that span reads GG.

Belongs to the acetylglutamate kinase family. ArgB subfamily.

The protein localises to the cytoplasm. The enzyme catalyses N-acetyl-L-glutamate + ATP = N-acetyl-L-glutamyl 5-phosphate + ADP. Its pathway is amino-acid biosynthesis; L-arginine biosynthesis; N(2)-acetyl-L-ornithine from L-glutamate: step 2/4. In terms of biological role, catalyzes the ATP-dependent phosphorylation of N-acetyl-L-glutamate. The chain is Acetylglutamate kinase from Vibrio vulnificus (strain YJ016).